The primary structure comprises 501 residues: Ribose import ATP-binding protein RbsA (501 aa).

ABC transporter domains follow at residues 5–241 (LQLK…VGRK) and 252–495 (APGE…VGKL). Position 37–44 (37–44 (GENGAGKS)) interacts with ATP.

Belongs to the ABC transporter superfamily. Ribose importer (TC 3.A.1.2.1) family. As to quaternary structure, the complex is composed of an ATP-binding protein (RbsA), two transmembrane proteins (RbsC) and a solute-binding protein (RbsB).

It is found in the cell inner membrane. The catalysed reaction is D-ribose(out) + ATP + H2O = D-ribose(in) + ADP + phosphate + H(+). In terms of biological role, part of the ABC transporter complex RbsABC involved in ribose import. Responsible for energy coupling to the transport system. The protein is Ribose import ATP-binding protein RbsA of Salmonella paratyphi A (strain ATCC 9150 / SARB42).